Consider the following 320-residue polypeptide: MGKLHRGLAEFNGCASSIPPKYQTVIISNEEKKGFSSQSRRFEEYLNESPGPGSYLSHSPAEGCSPSFSKRGTGSFASKGGRVPRSFQRLSPGPDAYNLQMSLLHKHDFNRGESRIFRLPYALKKEKPNNENPAPNQYDVSYRAVDKNSTISGESAFRSKTRRSAVVSDKFKGPSPCHYKVSDVLVQKSPQALVSCFKSKTARIQSPVRNNIPGPGTYNPHQPPEPVKRTVLPRRYYLGLSAPPLIPEKVPPFPGPGHYDIVNYNRPVKHMVSSAAFLSGTNRHMQEVKGQDIPGPGFYEPTVLSKTSFLYNPAKLWIPA.

The segment at 46–91 is disordered; it reads LNESPGPGSYLSHSPAEGCSPSFSKRGTGSFASKGGRVPRSFQRLS. STPGR repeat units lie at residues 49 to 82, 91 to 103, 132 to 163, 173 to 192, 213 to 233, 254 to 266, and 294 to 305; these read SPGP…KGGR, SPGP…QMSL, NPAP…KTRR, GPSP…SPQA, PGPG…TVLP, PGPG…NYNR, and PGPGFYEPTVLS. Over residues 66-76 the composition is skewed to polar residues; sequence PSFSKRGTGSF. Residues 207–226 are disordered; the sequence is PVRNNIPGPGTYNPHQPPEP.

It belongs to the STPG1 family.

The protein localises to the cytoplasm. It localises to the nucleus. May positively contribute to the induction of apoptosis triggered by O(6)-methylguanine. This chain is O(6)-methylguanine-induced apoptosis 2 (stpg1), found in Danio rerio (Zebrafish).